The primary structure comprises 66 residues: FMRFamide-like neuropeptide 21 (66 aa).

A signal peptide spans Met1 to Ala16.

The protein belongs to the FARP (FMRFamide related peptide) family. In terms of processing, may be processed by convertase egl-3. As to expression, expressed in the ADL, ASE and ASH sensory neurons, the URA motor neurons and the MC, M2 and M4 pharyngeal neurons.

The protein localises to the secreted. Its function is as follows. FMRFamide-like neuropeptide. Involved in modulating locomotion quiescence during the sleep-like state called lethargus which occurs during molting between larval and adult stages, acting via the G-protein coupled receptor npr-1. Plays a role in modulating social and feeding behavior. In terms of biological role, ligand to G-protein coupled receptor npr-1. The protein is FMRFamide-like neuropeptide 21 of Caenorhabditis elegans.